Reading from the N-terminus, the 1025-residue chain is Probable beta-galactosidase B (1025 aa).

The signal sequence occupies residues 1-21 (MATAFWLLLFLLGSLHVLTAA). N23 is a glycosylation site (N-linked (GlcNAc...) asparagine). Y90 provides a ligand contact to substrate. N100 carries an N-linked (GlcNAc...) asparagine glycan. Positions 135, 136, 137, and 195 each coordinate substrate. The Proton donor role is filled by E196. The N-linked (GlcNAc...) asparagine glycan is linked to N211. Residue Y265 coordinates substrate. C271 and C324 are disulfide-bonded. E308 (nucleophile) is an active-site residue. A substrate-binding site is contributed by Y373. N-linked (GlcNAc...) asparagine glycosylation is found at N411, N456, N736, N776, N884, N925, and N926.

This sequence belongs to the glycosyl hydrolase 35 family.

The protein resides in the secreted. The enzyme catalyses Hydrolysis of terminal non-reducing beta-D-galactose residues in beta-D-galactosides.. Functionally, cleaves beta-linked terminal galactosyl residues from gangliosides, glycoproteins, and glycosaminoglycans. This Emericella nidulans (strain FGSC A4 / ATCC 38163 / CBS 112.46 / NRRL 194 / M139) (Aspergillus nidulans) protein is Probable beta-galactosidase B (lacB).